The chain runs to 304 residues: Energy-coupling factor transporter ATP-binding protein EcfA2 (304 aa).

In terms of domain architecture, ABC transporter spans 3-261 (IIVKNISYIY…EKFLVENKLK (259 aa)). 40–47 (GSTGSGKT) is an ATP binding site.

This sequence belongs to the ABC transporter superfamily. Energy-coupling factor EcfA family. As to quaternary structure, forms a stable energy-coupling factor (ECF) transporter complex composed of 2 membrane-embedded substrate-binding proteins (S component), 2 ATP-binding proteins (A component) and 2 transmembrane proteins (T component).

The protein resides in the cell membrane. Its function is as follows. ATP-binding (A) component of a common energy-coupling factor (ECF) ABC-transporter complex. Unlike classic ABC transporters this ECF transporter provides the energy necessary to transport a number of different substrates. The protein is Energy-coupling factor transporter ATP-binding protein EcfA2 of Mycoplasmopsis pulmonis (strain UAB CTIP) (Mycoplasma pulmonis).